A 353-amino-acid chain; its full sequence is Abasic site processing protein HMCES (353 aa).

The Nucleophile role is filled by cysteine 2. A Thiazolidine linkage to a ring-opened DNA abasic site modification is found at cysteine 2. Glutamate 127 is an active-site residue. Glycyl lysine isopeptide (Lys-Gly) (interchain with G-Cter in SUMO2) cross-links involve residues lysine 148 and lysine 151. Serine 160 is subject to Phosphoserine. Glycyl lysine isopeptide (Lys-Gly) (interchain with G-Cter in SUMO2) cross-links involve residues lysine 274 and lysine 275. The disordered stretch occupies residues 292–353; sequence TKSPKKEVPD…DEPVAKRPNS (62 aa). At serine 294 the chain carries Phosphoserine. Basic and acidic residues predominate over residues 295–307; the sequence is PKKEVPDSPKKDA. Lysine 305 is covalently cross-linked (Glycyl lysine isopeptide (Lys-Gly) (interchain with G-Cter in SUMO2)). Residue serine 321 is modified to Phosphoserine. Residues 332-338 carry the PIP-box motif; it reads SLLDRWL. The segment covering 336–353 has biased composition (basic and acidic residues); it reads RWLKQEKEDEPVAKRPNS. Residues lysine 339 and lysine 342 each participate in a glycyl lysine isopeptide (Lys-Gly) (interchain with G-Cter in SUMO2) cross-link.

It belongs to the SOS response-associated peptidase family. As to quaternary structure, interacts (via PIP-box motif) with PCNA. Ubiquitinated; the covalent HMCES DNA-protein cross-link is ubiquitinated, leading to its degradation by the proteasome.

It localises to the chromosome. With respect to regulation, formation and reversal of DNA-protein cross-link depends on DNA context. Catalyzes formation of the thiazolidine linkage in presence of abasic sites in single-stranded DNA. Mediates the reversal of the thiazolidine cross-link in presence of double stranded DNA. Its function is as follows. Sensor of abasic sites in single-stranded DNA (ssDNA) required to preserve genome integrity by promoting error-free repair of abasic sites. Acts as an enzyme that recognizes and binds abasic sites in ssDNA at replication forks and chemically modifies the lesion by forming a covalent cross-link with DNA: forms a stable thiazolidine linkage between a ring-opened abasic site and the alpha-amino and sulfhydryl substituents of its N-terminal catalytic cysteine residue. Promotes error-free repair by protecting abasic sites from translesion synthesis (TLS) polymerases and endonucleases that are error-prone and would generate mutations and double-strand breaks. The HMCES DNA-protein cross-link is then either reversed or degraded. HMCES is able to catalyze the reversal of its thiazolidine cross-link and cycle between a cross-link and a non-cross-linked state depending on DNA context: mediates self-reversal of the thiazolidine cross-link in double stranded DNA, allowing APEX1 to initiate downstream repair of abasic sites. The HMCES DNA-protein cross-link can also be degraded by the SPRTN metalloprotease following unfolding by the BRIP1/FANCJ helicase. Has preference for ssDNA, but can also accommodate double-stranded DNA with 3' or 5' overhang (dsDNA), and dsDNA-ssDNA 3' junction. Plays a protective role during somatic hypermutation of immunoglobulin genes in B-cells: acts via its ability to form covalent cross-links with abasic sites, thereby limiting the accumulation of deletions in somatic hypermutation target regions. Also involved in class switch recombination (CSR) in B-cells independently of the formation of a DNA-protein cross-link: acts by binding and protecting ssDNA overhangs to promote DNA double-strand break repair through the microhomology-mediated alternative-end-joining (Alt-EJ) pathway. Acts as a protease: mediates autocatalytic processing of its N-terminal methionine in order to expose the catalytic cysteine. This Rattus norvegicus (Rat) protein is Abasic site processing protein HMCES.